Here is an 86-residue protein sequence, read N- to C-terminus: Small ribosomal subunit protein uS15c (86 aa).

This sequence belongs to the universal ribosomal protein uS15 family. As to quaternary structure, part of the 30S ribosomal subunit.

Its subcellular location is the plastid. This is Small ribosomal subunit protein uS15c (rps15) from Cuscuta obtusiflora (Peruvian dodder).